A 134-amino-acid chain; its full sequence is Interleukin-5 (134 aa).

A signal peptide spans 1–19; that stretch reads MRMLLHLSLLALGAAYVSA. N-linked (GlcNAc...) asparagine glycosylation is found at Asn-76 and Asn-90.

It belongs to the IL-5 family. As to quaternary structure, homodimer; disulfide-linked. Interacts with IL5RA. Interacts with CSF2RB.

It localises to the secreted. Functionally, homodimeric cytokine expressed predominantly by T-lymphocytes and NK cells that plays an important role in the survival, differentiation, and chemotaxis of eosinophils. Also acts on activated and resting B-cells to induce immunoglobulin production, growth, and differentiation. Mechanistically, exerts its biological effects through a receptor composed of IL5RA subunit and the cytokine receptor common subunit beta/CSF2RB. Binding to the receptor leads to activation of various kinases including LYN, SYK and JAK2 and thereby propagates signals through the RAS-MAPK and JAK-STAT5 pathways respectively. The protein is Interleukin-5 (IL5) of Felis catus (Cat).